The sequence spans 122 residues: Serum amyloid A-3 protein (122 aa).

The signal sequence occupies residues 1–18 (MKPFLAIIFCFLILGVDS). Positions 100 to 122 (ANKWGRSGKDPNHFRPAGLPSKY) are disordered.

Belongs to the SAA family. As to expression, expressed by the liver; secreted in plasma.

Its subcellular location is the secreted. In terms of biological role, major acute phase reactant. Apolipoprotein of the HDL complex. In vitro exhibits antimicrobial activity against Escherichia coli, Streptococcus uberis and Pseudomonas aeruginosa. The protein is Serum amyloid A-3 protein (SAA3) of Mesocricetus auratus (Golden hamster).